Consider the following 130-residue polypeptide: Small ribosomal subunit protein uS9 (130 aa).

Belongs to the universal ribosomal protein uS9 family.

The chain is Small ribosomal subunit protein uS9 from Bordetella pertussis (strain Tohama I / ATCC BAA-589 / NCTC 13251).